Here is a 470-residue protein sequence, read N- to C-terminus: tRNA modification GTPase MnmE (470 aa).

Residues R30, E92, and R132 each coordinate (6S)-5-formyl-5,6,7,8-tetrahydrofolate. The TrmE-type G domain occupies 227-393 (GLQVALVGRP…LIKAVLKTCG (167 aa)). Position 237 (N237) interacts with K(+). Residues 237–242 (NVGKSS), 256–262 (TDLPGTT), 281–284 (DTAG), and 342–345 (NKAD) contribute to the GTP site. S241 serves as a coordination point for Mg(2+). 3 residues coordinate K(+): T256, L258, and T261. T262 serves as a coordination point for Mg(2+). Residue K470 coordinates (6S)-5-formyl-5,6,7,8-tetrahydrofolate.

It belongs to the TRAFAC class TrmE-Era-EngA-EngB-Septin-like GTPase superfamily. TrmE GTPase family. In terms of assembly, homodimer. Heterotetramer of two MnmE and two MnmG subunits. The cofactor is K(+).

It is found in the cytoplasm. Its function is as follows. Exhibits a very high intrinsic GTPase hydrolysis rate. Involved in the addition of a carboxymethylaminomethyl (cmnm) group at the wobble position (U34) of certain tRNAs, forming tRNA-cmnm(5)s(2)U34. In Prochlorococcus marinus (strain MIT 9313), this protein is tRNA modification GTPase MnmE.